The primary structure comprises 252 residues: 5-oxoprolinase subunit A (252 aa).

This sequence belongs to the LamB/PxpA family. In terms of assembly, forms a complex composed of PxpA, PxpB and PxpC.

It catalyses the reaction 5-oxo-L-proline + ATP + 2 H2O = L-glutamate + ADP + phosphate + H(+). In terms of biological role, catalyzes the cleavage of 5-oxoproline to form L-glutamate coupled to the hydrolysis of ATP to ADP and inorganic phosphate. The polypeptide is 5-oxoprolinase subunit A (Mycobacterium avium (strain 104)).